Here is a 58-residue protein sequence, read N- to C-terminus: Conotoxin Leo-T2 (58 aa).

The N-terminal stretch at 1–22 is a signal peptide; sequence MRCLPVFIILPLLIPSAPSVDA. The propeptide occupies 23-47; the sequence is QPMTEDDVPLASFHEQTLQELWNKR.

This sequence belongs to the conotoxin T superfamily. In terms of processing, contains 2 disulfide bonds that can be either 'C1-C3, C2-C4' or 'C1-C4, C2-C3', since these disulfide connectivities have been observed for conotoxins with cysteine framework V (for examples, see AC P0DQQ7 and AC P81755). In terms of tissue distribution, expressed by the venom duct.

The protein resides in the secreted. The polypeptide is Conotoxin Leo-T2 (Conus leopardus (Leopard cone)).